The primary structure comprises 472 residues: Ribulose bisphosphate carboxylase large chain 1 (472 aa).

The substrate site is built by N115 and T165. The Proton acceptor role is filled by K167. K169 provides a ligand contact to substrate. Mg(2+)-binding residues include K193, D195, and E196. An N6-carboxylysine modification is found at K193. Catalysis depends on H286, which acts as the Proton acceptor. Substrate-binding residues include R287, H319, and S371.

It belongs to the RuBisCO large chain family. Type I subfamily. Heterohexadecamer of 8 large chains and 8 small chains. Mg(2+) serves as cofactor.

It catalyses the reaction 2 (2R)-3-phosphoglycerate + 2 H(+) = D-ribulose 1,5-bisphosphate + CO2 + H2O. The catalysed reaction is D-ribulose 1,5-bisphosphate + O2 = 2-phosphoglycolate + (2R)-3-phosphoglycerate + 2 H(+). Its function is as follows. RuBisCO catalyzes two reactions: the carboxylation of D-ribulose 1,5-bisphosphate, the primary event in carbon dioxide fixation, as well as the oxidative fragmentation of the pentose substrate. Both reactions occur simultaneously and in competition at the same active site. The protein is Ribulose bisphosphate carboxylase large chain 1 of Hydrogenovibrio marinus.